The primary structure comprises 154 residues: Myoglobin (154 aa).

One can recognise a Globin domain in the interval 2–148 (GLSDGEWQLV…FRHDMAAKYK (147 aa)). Phosphoserine is present on Ser-4. Nitrite is bound at residue His-65. His-65 serves as a coordination point for O2. Thr-68 carries the post-translational modification Phosphothreonine. Position 94 (His-94) interacts with heme b.

The protein belongs to the globin family. As to quaternary structure, monomeric.

The protein localises to the cytoplasm. Its subcellular location is the sarcoplasm. The catalysed reaction is Fe(III)-heme b-[protein] + nitric oxide + H2O = Fe(II)-heme b-[protein] + nitrite + 2 H(+). It carries out the reaction H2O2 + AH2 = A + 2 H2O. In terms of biological role, monomeric heme protein which primary function is to store oxygen and facilitate its diffusion within muscle tissues. Reversibly binds oxygen through a pentacoordinated heme iron and enables its timely and efficient release as needed during periods of heightened demand. Depending on the oxidative conditions of tissues and cells, and in addition to its ability to bind oxygen, it also has a nitrite reductase activity whereby it regulates the production of bioactive nitric oxide. Under stress conditions, like hypoxia and anoxia, it also protects cells against reactive oxygen species thanks to its pseudoperoxidase activity. This is Myoglobin (MB) from Osphranter rufus (Red kangaroo).